Reading from the N-terminus, the 335-residue chain is UPF0353 protein Mjls_2492 (335 aa).

Transmembrane regions (helical) follow at residues W18–L38 and L67–T87. The 197-residue stretch at V98–L294 folds into the VWFA domain. The helical transmembrane segment at V309–L329 threads the bilayer.

This sequence belongs to the UPF0353 family.

The protein localises to the cell membrane. The protein is UPF0353 protein Mjls_2492 of Mycobacterium sp. (strain JLS).